The following is a 266-amino-acid chain: Single-stranded DNA-binding protein WHY1, chloroplastic (266 aa).

The transit peptide at 1 to 37 (MPPPAPLFLSLASTPPPALMPVHHPRAPQSLTLVPPV) directs the protein to the chloroplast. Residues 53 to 81 (SPRHSDYFDPRAPPPPRGDGGYGRPPNGA) are disordered. A required for ssDNA binding region spans residues 94 to 99 (KGKAAL). The short motif at 172–185 (KGRSEEGKVRKVLK) is the Nuclear localization signal element.

The protein belongs to the Whirly family. In terms of assembly, homotetramer.

It is found in the plastid. Its subcellular location is the chloroplast stroma. The protein resides in the nucleus. Its function is as follows. Single-stranded DNA and RNA binding protein that maintains plastid genome stability by preventing break-induced and short homology-dependent illegitimate recombinations. Functions in RNA metabolism and is involved in the maturation of the atpF and 23S ribosomal RNAs. This Zea mays (Maize) protein is Single-stranded DNA-binding protein WHY1, chloroplastic (WHY1).